Here is a 495-residue protein sequence, read N- to C-terminus: Glutamate--tRNA ligase (495 aa).

The 'HIGH' region motif lies at 14–24; the sequence is PSPTGYLHIGS. The 'KMSKS' region motif lies at 255–259; sequence KLSKR. Lys-258 is an ATP binding site.

The protein belongs to the class-I aminoacyl-tRNA synthetase family. Glutamate--tRNA ligase type 1 subfamily. As to quaternary structure, monomer.

Its subcellular location is the cytoplasm. It carries out the reaction tRNA(Glu) + L-glutamate + ATP = L-glutamyl-tRNA(Glu) + AMP + diphosphate. Functionally, catalyzes the attachment of glutamate to tRNA(Glu) in a two-step reaction: glutamate is first activated by ATP to form Glu-AMP and then transferred to the acceptor end of tRNA(Glu). This Herpetosiphon aurantiacus (strain ATCC 23779 / DSM 785 / 114-95) protein is Glutamate--tRNA ligase.